The chain runs to 23 residues: Magainin-R2 (23 aa).

As to expression, expressed by the skin glands.

It is found in the secreted. Functionally, antimicrobial peptide. This Xenopus ruwenzoriensis (Uganda clawed frog) protein is Magainin-R2.